A 287-amino-acid polypeptide reads, in one-letter code: 4-hydroxybenzoate octaprenyltransferase (287 aa).

Helical transmembrane passes span 21–41 (VGIF…AKGA), 44–64 (FKIA…GCIV), 91–111 (VTEA…LVLL), 112–132 (LNRL…VYPF), 139–159 (LPQL…FAAT), 160–180 (VGHV…WPIV), 211–231 (LMIG…GWYL), 235–255 (YWFY…QFLI), and 263–283 (CFAA…GILL).

It belongs to the UbiA prenyltransferase family. It depends on Mg(2+) as a cofactor.

It is found in the cell inner membrane. The enzyme catalyses all-trans-octaprenyl diphosphate + 4-hydroxybenzoate = 4-hydroxy-3-(all-trans-octaprenyl)benzoate + diphosphate. It participates in cofactor biosynthesis; ubiquinone biosynthesis. In terms of biological role, catalyzes the prenylation of para-hydroxybenzoate (PHB) with an all-trans polyprenyl group. Mediates the second step in the final reaction sequence of ubiquinone-8 (UQ-8) biosynthesis, which is the condensation of the polyisoprenoid side chain with PHB, generating the first membrane-bound Q intermediate 3-octaprenyl-4-hydroxybenzoate. This chain is 4-hydroxybenzoate octaprenyltransferase, found in Coxiella burnetii (strain CbuG_Q212) (Coxiella burnetii (strain Q212)).